Reading from the N-terminus, the 312-residue chain is uncharacterized protein (312 aa).

Belongs to the mimivirus R69 family.

This is an uncharacterized protein from Acanthamoeba polyphaga mimivirus (APMV).